Reading from the N-terminus, the 403-residue chain is S-arrestin (403 aa).

An interaction with RHO region spans residues 11 to 19 (HVIFKKVSR). The residue at position 231 (threonine 231) is a Phosphothreonine. Residues 381–403 (RQNLKDTGENTEGKKDEDAGQDE) are disordered.

This sequence belongs to the arrestin family. Monomer. Homodimer. Homotetramer. Interacts with RHO (via the phosphorylated C-terminus). As to expression, detected in retina (at protein level).

The protein localises to the cell projection. It is found in the cilium. The protein resides in the photoreceptor outer segment. Its subcellular location is the membrane. Functionally, binds to photoactivated, phosphorylated RHO and terminates RHO signaling via G-proteins by competing with G-proteins for the same binding site on RHO. May play a role in preventing light-dependent degeneration of retinal photoreceptor cells. This Mus musculus (Mouse) protein is S-arrestin (Sag).